The chain runs to 299 residues: Glutamyl-Q tRNA(Asp) synthetase (299 aa).

Residues 18–22 (RFAPS) and Glu-54 contribute to the L-glutamate site. A 'HIGH' region motif is present at residues 21–31 (PSPSGALHFGS). Residues Cys-110, Cys-112, Tyr-124, and Cys-128 each coordinate Zn(2+). 2 residues coordinate L-glutamate: Tyr-181 and Arg-199. The 'KMSKS' region signature appears at 237–241 (KLSKQ). Position 240 (Lys-240) interacts with ATP.

The protein belongs to the class-I aminoacyl-tRNA synthetase family. GluQ subfamily. Requires Zn(2+) as cofactor.

Functionally, catalyzes the tRNA-independent activation of glutamate in presence of ATP and the subsequent transfer of glutamate onto a tRNA(Asp). Glutamate is transferred on the 2-amino-5-(4,5-dihydroxy-2-cyclopenten-1-yl) moiety of the queuosine in the wobble position of the QUC anticodon. The protein is Glutamyl-Q tRNA(Asp) synthetase of Shewanella oneidensis (strain ATCC 700550 / JCM 31522 / CIP 106686 / LMG 19005 / NCIMB 14063 / MR-1).